The following is a 776-amino-acid chain: V-set and immunoglobulin domain-containing protein 10-like 2 (776 aa).

Positions 1-28 (MVGLSAHHRPLGCRLLILFCLLHPGASG) are cleaved as a signal peptide. Ig-like domains lie at 32-140 (PTSN…LYLM), 150-234 (PRVQ…AFLD), 242-324 (PVIT…TTVQ), 399-498 (PTLA…LRLE), and 500-592 (PQLT…VLLE). Cystine bridges form between cysteine 56-cysteine 122, cysteine 169-cysteine 217, cysteine 268-cysteine 308, cysteine 435-cysteine 480, and cysteine 521-cysteine 576. One can recognise a Fibronectin type-III domain in the interval 608–708 (TPPNVTISRL…EVKTPVDPAF (101 aa)). N-linked (GlcNAc...) asparagine glycosylation is found at asparagine 611 and asparagine 637. A helical transmembrane segment spans residues 713 to 733 (AVLGAAGTGVVVALATSLLVF).

The protein localises to the membrane. The sequence is that of V-set and immunoglobulin domain-containing protein 10-like 2 from Mus musculus (Mouse).